Consider the following 424-residue polypeptide: Serine hydroxymethyltransferase 2 (424 aa).

(6S)-5,6,7,8-tetrahydrofolate-binding positions include leucine 125 and 129-131 (GHL). Lysine 234 bears the N6-(pyridoxal phosphate)lysine mark. Position 250 (glutamate 250) interacts with (6S)-5,6,7,8-tetrahydrofolate.

This sequence belongs to the SHMT family. Homodimer. Pyridoxal 5'-phosphate is required as a cofactor.

Its subcellular location is the cytoplasm. The catalysed reaction is (6R)-5,10-methylene-5,6,7,8-tetrahydrofolate + glycine + H2O = (6S)-5,6,7,8-tetrahydrofolate + L-serine. It functions in the pathway one-carbon metabolism; tetrahydrofolate interconversion. It participates in amino-acid biosynthesis; glycine biosynthesis; glycine from L-serine: step 1/1. Catalyzes the reversible interconversion of serine and glycine with tetrahydrofolate (THF) serving as the one-carbon carrier. This reaction serves as the major source of one-carbon groups required for the biosynthesis of purines, thymidylate, methionine, and other important biomolecules. Also exhibits THF-independent aldolase activity toward beta-hydroxyamino acids, producing glycine and aldehydes, via a retro-aldol mechanism. The chain is Serine hydroxymethyltransferase 2 from Burkholderia mallei (strain ATCC 23344).